Here is a 263-residue protein sequence, read N- to C-terminus: HTH-type transcriptional repressor NanR (263 aa).

An HTH gntR-type domain is found at 30–98 (KKLSEMVEEE…NGERARVSRP (69 aa)). Residues 58–77 (ERELMAFFNVGRPSVREALA) constitute a DNA-binding region (H-T-H motif).

The protein belongs to the NanR family.

Its function is as follows. Transcriptional repressor that controls expression of the genes required for the catabolism of sialic acids. In Salmonella bongori (strain ATCC 43975 / DSM 13772 / NCTC 12419), this protein is HTH-type transcriptional repressor NanR.